The sequence spans 498 residues: Ribulose bisphosphate carboxylase large chain (498 aa).

The propeptide occupies 1-2; sequence MS. Proline 3 bears the N-acetylproline mark. Residue lysine 14 is modified to N6,N6,N6-trimethyllysine. 2 residues coordinate substrate: asparagine 123 and threonine 173. Residue lysine 175 is the Proton acceptor of the active site. Residue lysine 177 participates in substrate binding. Positions 201, 203, and 204 each coordinate Mg(2+). Residue lysine 201 is modified to N6-carboxylysine. The active-site Proton acceptor is histidine 294. Substrate contacts are provided by arginine 295, histidine 327, and serine 379. A disordered region spans residues 473-498; it reads DTLDPNDKKQRDNEDTLADKFFGDKG.

The protein belongs to the RuBisCO large chain family. Type I subfamily. As to quaternary structure, heterohexadecamer of 8 large chains and 8 small chains; disulfide-linked. The disulfide link is formed within the large subunit homodimers. The cofactor is Mg(2+). In terms of processing, the disulfide bond which can form in the large chain dimeric partners within the hexadecamer appears to be associated with oxidative stress and protein turnover.

It localises to the plastid. It carries out the reaction 2 (2R)-3-phosphoglycerate + 2 H(+) = D-ribulose 1,5-bisphosphate + CO2 + H2O. It catalyses the reaction D-ribulose 1,5-bisphosphate + O2 = 2-phosphoglycolate + (2R)-3-phosphoglycerate + 2 H(+). Its function is as follows. RuBisCO catalyzes two reactions: the carboxylation of D-ribulose 1,5-bisphosphate, the primary event in carbon dioxide fixation, as well as the oxidative fragmentation of the pentose substrate in the photorespiration process. Both reactions occur simultaneously and in competition at the same active site. The chain is Ribulose bisphosphate carboxylase large chain from Cuscuta exaltata (Tall dodder).